Consider the following 468-residue polypeptide: Secretogranin-3 (468 aa).

An N-terminal signal peptide occupies residues 1–19 (MGFLGTGTWILVLVLPIQA). Residues 23–69 (PGGSQDKSLHNRELSAERPLNEQIAEAEEDKIKKTYPPENKPGQSNY) are disordered. Residues 29–42 (KSLHNRELSAERPL) show a composition bias toward basic and acidic residues. Serine 37 is modified (phosphoserine). O-linked (Xyl...) (chondroitin sulfate) serine glycosylation is present at serine 37. 2 O-linked (GalNAc...) threonine glycosylation sites follow: threonine 216 and threonine 231. Positions 353 to 406 (KLFPAPSEKSHEETDSTKEEAAKMEKEYGSLKDSTKDDNSNPGGKTDEPKGKTE) are disordered. O-linked (GalNAc...) serine glycosylation occurs at serine 359. A compositionally biased stretch (basic and acidic residues) spans 360-406 (EKSHEETDSTKEEAAKMEKEYGSLKDSTKDDNSNPGGKTDEPKGKTE). A Phosphoserine modification is found at serine 362.

As to quaternary structure, interacts with CHGA. Interacts with secretogranin II/SCG2. Interacts (via C-terminus) with CPE. O-glycosylated. Detected in urine (at protein level). Expressed in brain, heart, kidney, liver and skeletal muscle.

Its subcellular location is the cytoplasmic vesicle. The protein resides in the secretory vesicle. The protein localises to the secretory vesicle membrane. It localises to the secreted. Its function is as follows. Member of the granin protein family that regulates the biogenesis of secretory granules. Acts as a sorting receptor for intragranular proteins including chromogranin A/CHGA. May also play a role in angiogenesis. Promotes endothelial proliferation, migration and tube formation through MEK/ERK signaling pathway. The protein is Secretogranin-3 (SCG3) of Homo sapiens (Human).